The sequence spans 219 residues: PKHD-type hydroxylase AM1_3707 (219 aa).

Residues 78–172 form the Fe2OG dioxygenase domain; that stretch reads SIHTLLFSRY…RLVAVGWVQS (95 aa). His-96, Asp-98, and His-153 together coordinate Fe cation. A 2-oxoglutarate-binding site is contributed by Arg-163.

Fe(2+) is required as a cofactor. Requires L-ascorbate as cofactor.

In Acaryochloris marina (strain MBIC 11017), this protein is PKHD-type hydroxylase AM1_3707.